We begin with the raw amino-acid sequence, 424 residues long: MTDFGHDVWWLVVAKAIAIFVFLMLTVLVAILAERKLLGRMQLRPGPNRVGPKGSLQSLADGIKLALKESITPGGIDRFVYFVAPIISVIPAFTAFAFIPFGPVVSVFGHRTPLQLTDLPVAVLFILGLSAIGVYGIVLGGWASGSTYPLLGGVRSTAQVISYEVAMGLSFAAVFLYAGSMSTSQIIAAQDRVWYIFLLLPSFVIYLISMVGETNRAPFDLPEAEGELVAGFHTEYSSLKFAMFMLAEYVNMTTVSALAATLFLGGWHAPWPLNLWHGANAGWWPVLWFTAKVWGFLFMYFWLRATLPRLRYDQFMALGWKLLIPVSLVWVLIAAVIRTLRNQGYQYWTPALVVSSIVVAAILVMSLRKPFSTPNAVTKARRRGKQPAAGPDEQGALEPLFPTPPLPMKPLAQPVGASKENARG.

Helical transmembrane passes span 11–31 (LVVA…LVAI), 79–99 (FVYF…FAFI), 119–139 (LPVA…GIVL), 160–180 (VISY…YAGS), 193–213 (VWYI…MVGE), 255–275 (VSAL…PLNL), 283–303 (WWPV…YFWL), 317–337 (ALGW…AAVI), and 347–367 (YWTP…VMSL). The interval 376 to 424 (AVTKARRRGKQPAAGPDEQGALEPLFPTPPLPMKPLAQPVGASKENARG) is disordered.

This sequence belongs to the complex I subunit 1 family. As to quaternary structure, NDH-1 is composed of 14 different subunits. Subunits NuoA, H, J, K, L, M, N constitute the membrane sector of the complex.

It is found in the cell membrane. It carries out the reaction a quinone + NADH + 5 H(+)(in) = a quinol + NAD(+) + 4 H(+)(out). Functionally, NDH-1 shuttles electrons from NADH, via FMN and iron-sulfur (Fe-S) centers, to quinones in the respiratory chain. The immediate electron acceptor for the enzyme in this species is believed to be menaquinone. Couples the redox reaction to proton translocation (for every two electrons transferred, four hydrogen ions are translocated across the cytoplasmic membrane), and thus conserves the redox energy in a proton gradient. This subunit may bind ubiquinone. The chain is NADH-quinone oxidoreductase subunit H from Mycobacterium ulcerans (strain Agy99).